We begin with the raw amino-acid sequence, 233 residues long: Phosphatidylserine decarboxylase proenzyme (233 aa).

Ser-190 functions as the Schiff-base intermediate with substrate; via pyruvic acid in the catalytic mechanism. The residue at position 190 (Ser-190) is a Pyruvic acid (Ser); by autocatalysis.

It belongs to the phosphatidylserine decarboxylase family. PSD-A subfamily. As to quaternary structure, heterodimer of a large membrane-associated beta subunit and a small pyruvoyl-containing alpha subunit. It depends on pyruvate as a cofactor. Post-translationally, is synthesized initially as an inactive proenzyme. Formation of the active enzyme involves a self-maturation process in which the active site pyruvoyl group is generated from an internal serine residue via an autocatalytic post-translational modification. Two non-identical subunits are generated from the proenzyme in this reaction, and the pyruvate is formed at the N-terminus of the alpha chain, which is derived from the carboxyl end of the proenzyme. The post-translation cleavage follows an unusual pathway, termed non-hydrolytic serinolysis, in which the side chain hydroxyl group of the serine supplies its oxygen atom to form the C-terminus of the beta chain, while the remainder of the serine residue undergoes an oxidative deamination to produce ammonia and the pyruvoyl prosthetic group on the alpha chain.

It localises to the cell membrane. It carries out the reaction a 1,2-diacyl-sn-glycero-3-phospho-L-serine + H(+) = a 1,2-diacyl-sn-glycero-3-phosphoethanolamine + CO2. Its pathway is phospholipid metabolism; phosphatidylethanolamine biosynthesis; phosphatidylethanolamine from CDP-diacylglycerol: step 2/2. Catalyzes the formation of phosphatidylethanolamine (PtdEtn) from phosphatidylserine (PtdSer). In Azorhizobium caulinodans (strain ATCC 43989 / DSM 5975 / JCM 20966 / LMG 6465 / NBRC 14845 / NCIMB 13405 / ORS 571), this protein is Phosphatidylserine decarboxylase proenzyme.